The chain runs to 258 residues: Alcohol dehydrogenase 2 (258 aa).

9–33 (IFVGGLGFIGYEACKQLMAKNMASF) is a binding site for NAD(+). Residue serine 137 participates in substrate binding. The active-site Proton acceptor is tyrosine 150.

It belongs to the short-chain dehydrogenases/reductases (SDR) family. In terms of assembly, homodimer.

It catalyses the reaction a primary alcohol + NAD(+) = an aldehyde + NADH + H(+). The catalysed reaction is a secondary alcohol + NAD(+) = a ketone + NADH + H(+). In Ceratitis capitata (Mediterranean fruit fly), this protein is Alcohol dehydrogenase 2 (ADH2).